Here is a 93-residue protein sequence, read N- to C-terminus: Consomatin G1 (93 aa).

A signal peptide spans 1–22; sequence MQTAYWVMLMMMVCITAPLPEG. Positions 23–69 are excised as a propeptide; that stretch reads GKPNSGIRGLVPNDLTPQHTLRSLISRRQTDVLLDATLLTTPAPEQR. A disulfide bridge connects residues Cys-72 and Cys-77. Trp-74 is modified (D-tryptophan). Positions 79–93 are excised as a propeptide; it reads PRPYPWRRRDLNGKR.

The protein belongs to the conotoxin C superfamily. Consomatin family. Expressed by the venom duct.

It localises to the secreted. Its function is as follows. Potently activates human somatostatin receptors (SSTR) with a specific activation of SSTR2 (EC(50)=2.6 nM). The protein is Consomatin G1 of Conus geographus (Geography cone).